Reading from the N-terminus, the 552-residue chain is Dihydroxy-acid dehydratase (552 aa).

Aspartate 78 provides a ligand contact to Mg(2+). A [2Fe-2S] cluster-binding site is contributed by cysteine 119. The Mg(2+) site is built by aspartate 120 and lysine 121. Residue lysine 121 is modified to N6-carboxylysine. Position 191 (cysteine 191) interacts with [2Fe-2S] cluster. Residue glutamate 442 participates in Mg(2+) binding. Catalysis depends on serine 468, which acts as the Proton acceptor.

It belongs to the IlvD/Edd family. In terms of assembly, homodimer. [2Fe-2S] cluster serves as cofactor. Mg(2+) is required as a cofactor.

The enzyme catalyses (2R)-2,3-dihydroxy-3-methylbutanoate = 3-methyl-2-oxobutanoate + H2O. The catalysed reaction is (2R,3R)-2,3-dihydroxy-3-methylpentanoate = (S)-3-methyl-2-oxopentanoate + H2O. Its pathway is amino-acid biosynthesis; L-isoleucine biosynthesis; L-isoleucine from 2-oxobutanoate: step 3/4. It functions in the pathway amino-acid biosynthesis; L-valine biosynthesis; L-valine from pyruvate: step 3/4. Functions in the biosynthesis of branched-chain amino acids. Catalyzes the dehydration of (2R,3R)-2,3-dihydroxy-3-methylpentanoate (2,3-dihydroxy-3-methylvalerate) into 2-oxo-3-methylpentanoate (2-oxo-3-methylvalerate) and of (2R)-2,3-dihydroxy-3-methylbutanoate (2,3-dihydroxyisovalerate) into 2-oxo-3-methylbutanoate (2-oxoisovalerate), the penultimate precursor to L-isoleucine and L-valine, respectively. This Moorella thermoacetica (strain ATCC 39073 / JCM 9320) protein is Dihydroxy-acid dehydratase.